A 149-amino-acid chain; its full sequence is Large ribosomal subunit protein bL9 (149 aa).

This sequence belongs to the bacterial ribosomal protein bL9 family.

Its function is as follows. Binds to the 23S rRNA. The chain is Large ribosomal subunit protein bL9 from Amoebophilus asiaticus (strain 5a2).